A 316-amino-acid chain; its full sequence is Protoheme IX farnesyltransferase (316 aa).

Helical transmembrane passes span 29–49 (IIPL…EGRV), 54–74 (LLIT…LNCI), 102–122 (LIFA…FVNV), 123–143 (LSGC…THWL), 151–171 (IVIG…AVTG), 179–199 (VLFA…ALMI), 224–241 (IWYY…LVYP), 245–267 (LGIL…AWQL), and 283–303 (FSIF…LPVT).

Belongs to the UbiA prenyltransferase family. Protoheme IX farnesyltransferase subfamily.

The protein resides in the cell inner membrane. It catalyses the reaction heme b + (2E,6E)-farnesyl diphosphate + H2O = Fe(II)-heme o + diphosphate. It functions in the pathway porphyrin-containing compound metabolism; heme O biosynthesis; heme O from protoheme: step 1/1. In terms of biological role, converts heme B (protoheme IX) to heme O by substitution of the vinyl group on carbon 2 of heme B porphyrin ring with a hydroxyethyl farnesyl side group. The chain is Protoheme IX farnesyltransferase from Synechocystis sp. (strain ATCC 27184 / PCC 6803 / Kazusa).